Consider the following 273-residue polypeptide: Type III pantothenate kinase (273 aa).

Aspartate 5–valine 12 contributes to the ATP binding site. Glycine 112 to leucine 115 serves as a coordination point for substrate. Catalysis depends on aspartate 114, which acts as the Proton acceptor. Position 134 (aspartate 134) interacts with K(+). Threonine 137 contributes to the ATP binding site. Threonine 189 serves as a coordination point for substrate.

It belongs to the type III pantothenate kinase family. As to quaternary structure, homodimer. NH4(+) serves as cofactor. K(+) is required as a cofactor.

Its subcellular location is the cytoplasm. It carries out the reaction (R)-pantothenate + ATP = (R)-4'-phosphopantothenate + ADP + H(+). Its pathway is cofactor biosynthesis; coenzyme A biosynthesis; CoA from (R)-pantothenate: step 1/5. Catalyzes the phosphorylation of pantothenate (Pan), the first step in CoA biosynthesis. The sequence is that of Type III pantothenate kinase from Treponema pallidum subsp. pallidum (strain SS14).